A 473-amino-acid chain; its full sequence is 3-isopropylmalate dehydratase large subunit (473 aa).

Residues Cys351, Cys414, and Cys417 each coordinate [4Fe-4S] cluster.

The protein belongs to the aconitase/IPM isomerase family. LeuC type 1 subfamily. In terms of assembly, heterodimer of LeuC and LeuD. It depends on [4Fe-4S] cluster as a cofactor.

The enzyme catalyses (2R,3S)-3-isopropylmalate = (2S)-2-isopropylmalate. It participates in amino-acid biosynthesis; L-leucine biosynthesis; L-leucine from 3-methyl-2-oxobutanoate: step 2/4. Catalyzes the isomerization between 2-isopropylmalate and 3-isopropylmalate, via the formation of 2-isopropylmaleate. This Polaromonas sp. (strain JS666 / ATCC BAA-500) protein is 3-isopropylmalate dehydratase large subunit.